Consider the following 1015-residue polypeptide: MKLLKPTWVNHNGKPIFSVDIHPDGTKFATGGQGQDSGKVVIWNMSPVLQEDDEKDENIPKMLCQMDNHLACVNCVRWSNSGMYLASGGDDKLIMVWKRATYIGPSTVFGSSGKLANVEQWRCVSILRSHSGDVMDVAWSPHDAWLASCSVDNTVVIWNAVKFPEILATLRGHSGLVKGLTWDPVGKYIASQADDRSLKVWRTLDWQLETSITKPFDECGGTTHVLRLSWSPDGHYLVSAHAMNNSGPTAQIIEREGWKTNMDFVGHRKAVTVVKFNPKIFKKKQKNGSSTKPSCPYCCCAVGSKDRSLSVWLTCLKRPLVVIHELFDKSIMDISWTLNGLGILVCSMDGSVAFLDFSQDELGDPLSEEEKSRIHQSTYGKSLAIMTEAQLSTAVIENPEMLKYQRRQQQQQLDQKNATTRETSSASSVTGVVNGESLEDIRKNLLKKQVETRTADGRRRITPLCIAQLDTGDFSTAFFNSIPLSSSLAGTMLSSPSGQQLLPLDSSTPSFGASKPCTEPVAATSARPTGESVSKDSMNATSTPAASSPSVLTTPSKIEPMKAFDSRFTERSKATPGAPSLTSVIPTAVERLKEQNLVKELRSRELESSSDSDEKVHLAKPSSLSKRKLELEVETVEKKKKGRPRKDSRLLPMSLSVQSPAALSTEKEAMCLSAPALALKLPIPGPQRAFTLQVSSDPSMYIEVENEVTTVGGIRLSRLKCNREGKEWETVLSSRVLTAAGSCDVVCVACEKRMLSVFSTCGRRLLPPILLPSPISTLHCTGPYVMALTAAATLSVWDVHRQVVVVKEESLHSILSGSDMTVSQILLTQHGIPVMNLSDGKAYCFNPSLSTWNLVSDKQDSLAQCADFRNSLPSQDAMLCSGPLAIIQGRTSNSGRQAARLFSVPHVVQQETTLAYLENQVAAALTLQSSHEYRHWLLLYARYLVNEGFEYRLREICKDLLGPVHCSTGSQWESTVVGLRKRELLKELLPVIGQNLRFQRLFTECQEQLDILRDK.

WD repeat units follow at residues 11 to 53 (HNGK…QEDD) and 68 to 107 (NHLA…GPST). Residue Ser111 is modified to Phosphoserine. WD repeat units lie at residues 129–168 (SHSG…EILA), 172–211 (GHSG…LETS), 220–263 (GGTT…TNMD), 266–322 (GHRK…PLVV), and 326–367 (LFDK…DPLS). The interval 408-431 (QQQQQLDQKNATTRETSSASSVTG) is disordered. A compositionally biased stretch (polar residues) spans 413–431 (LDQKNATTRETSSASSVTG). The interaction with ASF1A stretch occupies residues 421–479 (RETSSASSVTGVVNGESLEDIRKNLLKKQVETRTADGRRRITPLCIAQLDTGDFSTAFF). An interaction with CCNA1 region spans residues 421 to 727 (RETSSASSVT…RLKCNREGKE (307 aa)). The interval 439–475 (EDIRKNLLKKQVETRTADGRRRITPLCIAQLDTGDFS) is required for repression of histone gene transcription. 2 stretches are compositionally biased toward low complexity: residues 494–507 (SSPS…LDSS) and 540–556 (ATST…TTPS). Residues 494-558 (SSPSGQQLLP…PSVLTTPSKI (65 aa)) are disordered. At Ser548 the chain carries Phosphoserine. Thr554 carries the phosphothreonine modification. A Phosphoserine modification is found at Ser556. Thr575 carries the phosphothreonine modification. Ser583, Ser608, Ser609, Ser610, Ser612, Ser659, and Ser673 each carry phosphoserine. Interaction with PAX3 stretches follow at residues 593-737 (KEQN…SRVL) and 738-826 (TAAG…SQIL). The interval 594–824 (EQNLVKELRS…LSGSDMTVSQ (231 aa)) is interaction with histone H2B. The span at 603–617 (SRELESSSDSDEKVH) shows a compositional bias: basic and acidic residues. Positions 603–623 (SRELESSSDSDEKVHLAKPSS) are disordered. The interval 736 to 1015 (VLTAAGSCDV…QEQLDILRDK (280 aa)) is interaction with histone H4.

It belongs to the WD repeat HIR1 family. As to quaternary structure, interacts with CCNA1, HIRIP3 and NFU1/HIRIP5. Part of a complex which includes ASF1A, CABIN1, histone H3.3, histone H4 and UBN1. Interacts with histone H2B, histone H3-3B, PAX3 and PAX7. Sumoylated. Post-translationally, phosphorylated by CDK2/CCNA1 and CDK2/CCNE1 on Thr-554 in vitro. Also phosphorylated on Thr-554 in vivo. Expressed in cerebrum, cerebellum, heart, kidney, liver, lung and spleen.

The protein localises to the nucleus. Its subcellular location is the PML body. In terms of biological role, required for the periodic repression of histone gene transcription during the cell cycle. Cooperates with ASF1A to promote replication-independent chromatin assembly. Required for the formation of senescence-associated heterochromatin foci (SAHF) and efficient senescence-associated cell cycle exit. This chain is Protein HIRA (Hira), found in Mus musculus (Mouse).